Consider the following 418-residue polypeptide: Serine hydroxymethyltransferase (418 aa).

(6S)-5,6,7,8-tetrahydrofolate-binding positions include Leu-117 and 121–123; that span reads GHL. Lys-225 is subject to N6-(pyridoxal phosphate)lysine.

This sequence belongs to the SHMT family. Homodimer. It depends on pyridoxal 5'-phosphate as a cofactor.

It localises to the cytoplasm. The catalysed reaction is (6R)-5,10-methylene-5,6,7,8-tetrahydrofolate + glycine + H2O = (6S)-5,6,7,8-tetrahydrofolate + L-serine. It functions in the pathway one-carbon metabolism; tetrahydrofolate interconversion. Its pathway is amino-acid biosynthesis; glycine biosynthesis; glycine from L-serine: step 1/1. Catalyzes the reversible interconversion of serine and glycine with tetrahydrofolate (THF) serving as the one-carbon carrier. This reaction serves as the major source of one-carbon groups required for the biosynthesis of purines, thymidylate, methionine, and other important biomolecules. Also exhibits THF-independent aldolase activity toward beta-hydroxyamino acids, producing glycine and aldehydes, via a retro-aldol mechanism. The polypeptide is Serine hydroxymethyltransferase (Mycoplasma mobile (strain ATCC 43663 / 163K / NCTC 11711) (Mesomycoplasma mobile)).